The chain runs to 270 residues: Type III pantothenate kinase (270 aa).

11-18 (DAGNSRIK) serves as a coordination point for ATP. Substrate-binding positions include Y96 and 103 to 106 (GSDR). The active-site Proton acceptor is D105. T129 serves as a coordination point for ATP. T195 contributes to the substrate binding site.

Belongs to the type III pantothenate kinase family. In terms of assembly, homodimer. NH4(+) is required as a cofactor. K(+) serves as cofactor.

Its subcellular location is the cytoplasm. The enzyme catalyses (R)-pantothenate + ATP = (R)-4'-phosphopantothenate + ADP + H(+). It functions in the pathway cofactor biosynthesis; coenzyme A biosynthesis; CoA from (R)-pantothenate: step 1/5. In terms of biological role, catalyzes the phosphorylation of pantothenate (Pan), the first step in CoA biosynthesis. This Paraburkholderia xenovorans (strain LB400) protein is Type III pantothenate kinase.